A 139-amino-acid polypeptide reads, in one-letter code: ATP synthase epsilon chain 2 (139 aa).

It belongs to the ATPase epsilon chain family. As to quaternary structure, F-type ATPases have 2 components, CF(1) - the catalytic core - and CF(0) - the membrane proton channel. CF(1) has five subunits: alpha(3), beta(3), gamma(1), delta(1), epsilon(1). CF(0) has three main subunits: a, b and c.

The protein localises to the cell inner membrane. Produces ATP from ADP in the presence of a proton gradient across the membrane. The polypeptide is ATP synthase epsilon chain 2 (Paraburkholderia xenovorans (strain LB400)).